Reading from the N-terminus, the 596-residue chain is Elongation factor 4 (596 aa).

Residues 2–184 enclose the tr-type G domain; sequence KHIRNFSIIA…VIVEQIPPPE (183 aa). Residues 14 to 19 and 131 to 134 each bind GTP; these read DHGKST and NKID.

The protein belongs to the TRAFAC class translation factor GTPase superfamily. Classic translation factor GTPase family. LepA subfamily.

The protein localises to the cell inner membrane. The catalysed reaction is GTP + H2O = GDP + phosphate + H(+). Required for accurate and efficient protein synthesis under certain stress conditions. May act as a fidelity factor of the translation reaction, by catalyzing a one-codon backward translocation of tRNAs on improperly translocated ribosomes. Back-translocation proceeds from a post-translocation (POST) complex to a pre-translocation (PRE) complex, thus giving elongation factor G a second chance to translocate the tRNAs correctly. Binds to ribosomes in a GTP-dependent manner. In Shewanella sp. (strain MR-7), this protein is Elongation factor 4.